We begin with the raw amino-acid sequence, 489 residues long: Probable cytosol aminopeptidase (489 aa).

Residues K255 and D260 each coordinate Mn(2+). Residue K267 is part of the active site. Mn(2+) is bound by residues D279, D339, and E341. The active site involves R343.

It belongs to the peptidase M17 family. Requires Mn(2+) as cofactor.

It is found in the cytoplasm. It carries out the reaction Release of an N-terminal amino acid, Xaa-|-Yaa-, in which Xaa is preferably Leu, but may be other amino acids including Pro although not Arg or Lys, and Yaa may be Pro. Amino acid amides and methyl esters are also readily hydrolyzed, but rates on arylamides are exceedingly low.. The catalysed reaction is Release of an N-terminal amino acid, preferentially leucine, but not glutamic or aspartic acids.. Presumably involved in the processing and regular turnover of intracellular proteins. Catalyzes the removal of unsubstituted N-terminal amino acids from various peptides. The chain is Probable cytosol aminopeptidase from Synechococcus sp. (strain CC9605).